Here is a 396-residue protein sequence, read N- to C-terminus: Putative protein IntB (396 aa).

The Core-binding (CB) domain occupies Arg71 to Val151. Residues Gln174–Leu367 form the Tyr recombinase domain. Catalysis depends on residues Arg213, Lys252, His316, Arg319, and His343. The active-site O-(3'-phospho-DNA)-tyrosine intermediate is Tyr353.

This sequence belongs to the 'phage' integrase family.

The protein is Putative protein IntB (intB) of Escherichia coli (strain K12).